Here is a 261-residue protein sequence, read N- to C-terminus: MAAISTCQTVIPLPIPVFFNQQFPTLVDICARWQLVFDADAPFELRFESDTLTLHKRDEPKLDGIMVDFVTGAVAHRRKFGGGRGQSIAKAVGLKQGVTPKVVDGTAGLGRDAFVLASLGCTVTMVERHPVVAALLEDGLRRAYQDAEIGDWMRERMQLFHGSSLEALAKLEQEVDVVYLDPMYPHRDKSALVKKEMRVFQTLVGADLDADGLLAPAMALASKRVVVKRPDYAEDLAGVKPSMVIETKKNRFDVYVKSAMK.

S-adenosyl-L-methionine is bound by residues 111 to 112, 127 to 128, 163 to 164, and Asp-181; these read RD, ER, and SS.

Belongs to the methyltransferase superfamily. RsmJ family.

The protein resides in the cytoplasm. The catalysed reaction is guanosine(1516) in 16S rRNA + S-adenosyl-L-methionine = N(2)-methylguanosine(1516) in 16S rRNA + S-adenosyl-L-homocysteine + H(+). Specifically methylates the guanosine in position 1516 of 16S rRNA. In Shewanella sp. (strain MR-4), this protein is Ribosomal RNA small subunit methyltransferase J.